The sequence spans 202 residues: Glycerol-3-phosphate acyltransferase (202 aa).

The next 6 membrane-spanning stretches (helical) occupy residues 2 to 22 (MIIVMLLLSYLIGAFPSGFVI), 54 to 74 (FLVTFLDIFKGFITVFFPLWL), 85 to 105 (FFTNGLIVGLFAILGHVYPVY), 120 to 140 (VVLGVNPILLLILAIIFFIVL), 141 to 161 (KIFKYVSLASIVAAICCVIGS), and 162 to 182 (LIIQDYILLVVSFLVSIILII).

It belongs to the PlsY family. As to quaternary structure, probably interacts with PlsX.

The protein localises to the cell membrane. It catalyses the reaction an acyl phosphate + sn-glycerol 3-phosphate = a 1-acyl-sn-glycero-3-phosphate + phosphate. Its pathway is lipid metabolism; phospholipid metabolism. Catalyzes the transfer of an acyl group from acyl-phosphate (acyl-PO(4)) to glycerol-3-phosphate (G3P) to form lysophosphatidic acid (LPA). This enzyme utilizes acyl-phosphate as fatty acyl donor, but not acyl-CoA or acyl-ACP. In Staphylococcus aureus (strain Mu3 / ATCC 700698), this protein is Glycerol-3-phosphate acyltransferase.